Reading from the N-terminus, the 239-residue chain is 2,3,4,5-tetrahydropyridine-2,6-dicarboxylate N-acetyltransferase (239 aa).

This sequence belongs to the transferase hexapeptide repeat family. DapH subfamily.

The enzyme catalyses (S)-2,3,4,5-tetrahydrodipicolinate + acetyl-CoA + H2O = L-2-acetamido-6-oxoheptanedioate + CoA. Its pathway is amino-acid biosynthesis; L-lysine biosynthesis via DAP pathway; LL-2,6-diaminopimelate from (S)-tetrahydrodipicolinate (acetylase route): step 1/3. In terms of biological role, catalyzes the transfer of an acetyl group from acetyl-CoA to tetrahydrodipicolinate. The sequence is that of 2,3,4,5-tetrahydropyridine-2,6-dicarboxylate N-acetyltransferase from Staphylococcus aureus (strain Newman).